Here is a 364-residue protein sequence, read N- to C-terminus: Chaperone protein DnaJ (364 aa).

In terms of domain architecture, J spans 5-71 (DYYEILGVAK…QKRQAYDQFG (67 aa)). Residues 127 to 205 (GSTVKIRIPK…CRGQGLVRKQ (79 aa)) form a CR-type zinc finger. Residues Cys140, Cys143, Cys157, Cys160, Cys179, Cys182, Cys193, and Cys196 each contribute to the Zn(2+) site. 4 CXXCXGXG motif repeats span residues 140–147 (CDTCSGIG), 157–164 (CSICSGVG), 179–186 (CGTCSGTG), and 193–200 (CGTCRGQG).

It belongs to the DnaJ family. In terms of assembly, homodimer. It depends on Zn(2+) as a cofactor.

Its subcellular location is the cytoplasm. Functionally, participates actively in the response to hyperosmotic and heat shock by preventing the aggregation of stress-denatured proteins and by disaggregating proteins, also in an autonomous, DnaK-independent fashion. Unfolded proteins bind initially to DnaJ; upon interaction with the DnaJ-bound protein, DnaK hydrolyzes its bound ATP, resulting in the formation of a stable complex. GrpE releases ADP from DnaK; ATP binding to DnaK triggers the release of the substrate protein, thus completing the reaction cycle. Several rounds of ATP-dependent interactions between DnaJ, DnaK and GrpE are required for fully efficient folding. Also involved, together with DnaK and GrpE, in the DNA replication of plasmids through activation of initiation proteins. The chain is Chaperone protein DnaJ from Ruthia magnifica subsp. Calyptogena magnifica.